Consider the following 194-residue polypeptide: Peptide deformylase (194 aa).

Residues Cys-105 and His-147 each contribute to the Fe cation site. The active site involves Glu-148. A Fe cation-binding site is contributed by His-151.

It belongs to the polypeptide deformylase family. Fe(2+) serves as cofactor.

The catalysed reaction is N-terminal N-formyl-L-methionyl-[peptide] + H2O = N-terminal L-methionyl-[peptide] + formate. Its function is as follows. Removes the formyl group from the N-terminal Met of newly synthesized proteins. Requires at least a dipeptide for an efficient rate of reaction. N-terminal L-methionine is a prerequisite for activity but the enzyme has broad specificity at other positions. This is Peptide deformylase from Flavobacterium psychrophilum (strain ATCC 49511 / DSM 21280 / CIP 103535 / JIP02/86).